A 432-amino-acid polypeptide reads, in one-letter code: Alkaline protease secretion protein AprE (432 aa).

Topologically, residues 1 to 14 (MTRTVKRDENAYAR) are cytoplasmic. Residues 15–36 (LGWLLVLFGFGGALLWAAFAPL) form a helical membrane-spanning segment. Residues 37–432 (DQGVAVPATV…DRAHVALAEN (396 aa)) are Periplasmic-facing.

This sequence belongs to the membrane fusion protein (MFP) (TC 8.A.1) family.

The protein resides in the cell inner membrane. In terms of biological role, involved in the secretion of alkaline protease. This chain is Alkaline protease secretion protein AprE (aprE), found in Pseudomonas aeruginosa (strain ATCC 15692 / DSM 22644 / CIP 104116 / JCM 14847 / LMG 12228 / 1C / PRS 101 / PAO1).